The chain runs to 193 residues: C-type lectin domain family 3 member A homolog (193 aa).

Residues 1-24 (MAQAGLLIWLFFTILLLDLTCTQS) form the signal peptide. 3 disulfide bridges follow: C66/C76, C93/C188, and C164/C180. The C-type lectin domain occupies 72-189 (IHKKCYLSFE…CRSLKKYICE (118 aa)).

Its subcellular location is the secreted. The sequence is that of C-type lectin domain family 3 member A homolog (clec3a) from Xenopus laevis (African clawed frog).